The chain runs to 811 residues: DNA mismatch repair protein MutS (811 aa).

Position 583–590 (583–590) interacts with ATP; the sequence is GPNMAGKS.

This sequence belongs to the DNA mismatch repair MutS family.

In terms of biological role, this protein is involved in the repair of mismatches in DNA. It is possible that it carries out the mismatch recognition step. This protein has a weak ATPase activity. In Thermus thermophilus (strain ATCC BAA-163 / DSM 7039 / HB27), this protein is DNA mismatch repair protein MutS.